The sequence spans 654 residues: Hemagglutinin-esterase-fusion glycoprotein (654 aa).

The first 14 residues, 1 to 14 (MFFSLLLMLGLTEA), serve as a signal peptide directing secretion. The fusion domain-1 stretch occupies residues 15 to 40 (EKIKICLQKQVNSSFSLHNGFGGNLY). The Extracellular portion of the chain corresponds to 15–629 (EKIKICLQKQ…QSDPFYWGSS (615 aa)). 4 cysteine pairs are disulfide-bonded: Cys-20–Cys-582, Cys-209–Cys-251, Cys-228–Cys-315, and Cys-236–Cys-288. Asn-26 and Asn-61 each carry an N-linked (GlcNAc...) asparagine; by host glycan. The interval 41 to 157 (ATEEKRMFEL…KLNFQKSIYE (117 aa)) is esterase domain-1. The active-site Nucleophile is Ser-71. N-linked (GlcNAc...) asparagine; by host glycans are attached at residues Asn-143 and Asn-188. The N-acetyl-9-O-acetylneuraminic acid binding stretch occupies residues 157-309 (ELASQSHCMS…VRSSPRFLLM (153 aa)). The interval 309–363 (MPERSYCFDMKEKGPVTAVQSIWGKGRKSDYAVDQACLSTPGCMLIQKQKPYIGE) is esterase domain-2. Residues 364-654 (ADDHHGDQEM…ISGIAICRTK (291 aa)) form a fusion domain-2 region. Residues Asp-365 and His-368 each act as charge relay system in the active site. N-linked (GlcNAc...) asparagine; by host glycosylation is found at Asn-394, Asn-551, and Asn-602. Residues 630-650 (LGLAITAANLMAALVISGIAI) traverse the membrane as a helical segment. The Cytoplasmic segment spans residues 651–654 (CRTK).

This sequence belongs to the influenza viruses hemagglutinin family. In terms of assembly, homotrimer of disulfide-linked HEF1-HEF2. In natural infection, inactive HEF is matured into HEF1 and HEF2 outside the cell by one or more trypsin-like, arginine-specific endoprotease.

It localises to the virion membrane. The protein resides in the host cell membrane. The catalysed reaction is N-acetyl-9-O-acetylneuraminate + H2O = N-acetylneuraminate + acetate + H(+). The enzyme catalyses N-acetyl-4-O-acetylneuraminate + H2O = N-acetylneuraminate + acetate + H(+). Binds to the N-acetyl-9-O-acetylneuraminic acid residues on the cell surface, bringing about the attachment of the virus particle to the cell. Plays a major role in the determination of host range restriction and virulence. Class I viral fusion protein. Responsible for penetration of the virus into the cell cytoplasm by mediating the fusion of the membrane of the endocytosed virus particle with the endosomal membrane. Low pH in endosomes induce an irreversible conformational change in HEF2, releasing the fusion hydrophobic peptide. Several trimers are required to form a competent fusion pore. Displays a receptor-destroying activity which is a neuraminidate-O-acetyl esterase. This activity cleaves off any receptor on the cell surface, which would otherwise prevent virions release. These cleavages prevent self-aggregation and ensure the efficient spread of the progeny virus from cell to cell. The polypeptide is Hemagglutinin-esterase-fusion glycoprotein (Influenza C virus (strain C/California/1978)).